Consider the following 572-residue polypeptide: Pentatricopeptide repeat-containing protein At1g26900, mitochondrial (572 aa).

The N-terminal 117 residues, 1–117, are a transit peptide targeting the mitochondrion; it reads MTLAITSRLR…RAFSVFNQLR (117 aa). 12 PPR repeats span residues 89–123, 124–158, 159–189, 191–225, 226–260, 261–291, 292–326, 327–361, 362–392, 393–427, 430–460, and 466–496; these read NLFM…GLTL, DRFS…GFMV, FTDL…MPQS, DAVT…EVVV, NVST…GLDL, DLHL…AIRK, DVVT…KMKP, NSST…RIAL, DAIL…MKDK, DVKS…NCKV, NEIT…MVEA, and KVEH…LPIT. The tract at residues 501 to 572 is type E motif; it reads AWRALLAACR…EAGYSAIEIE (72 aa).

The protein belongs to the PPR family. PCMP-E subfamily.

Its subcellular location is the mitochondrion. In Arabidopsis thaliana (Mouse-ear cress), this protein is Pentatricopeptide repeat-containing protein At1g26900, mitochondrial (PCMP-E54).